The chain runs to 493 residues: Voltage-gated potassium channel regulatory subunit KCNF1 (493 aa).

The Cytoplasmic portion of the chain corresponds to 1–183 (MDASAEQSLP…KPESSCPARV (183 aa)). A helical transmembrane segment spans residues 184–204 (VAVLSFLLILVSSVVMCMGTI). The chain crosses the membrane as a helical span at residues 224-244 (NVETACIGWFTLEYLLRLFSS). Over 245–249 (PNKLH) the chain is Cytoplasmic. A helical transmembrane segment spans residues 250-270 (FALSFMNIVDVLAILPFYVSL). The chain crosses the membrane as a helical; Voltage-sensor span at residues 290-310 (QALRIMRIARIFKLARHSSGL). Residues 311-324 (QTLTYALKRSFKEL) lie on the Cytoplasmic side of the membrane. A helical transmembrane segment spans residues 325–345 (GLLLMYLAVGIFVFSALGYTM). The pore-forming intramembrane region spans 358–378 (PQSFWWAIITMTTVGYGDIYP). The Selectivity filter motif lies at 370–375 (TVGYGD). Residues 386–406 (NAAISFLCGVIAIALPIHPII) traverse the membrane as a helical segment. Residues 407 to 493 (NNFVRYYNKQ…HHRTRLQSCK (87 aa)) lie on the Cytoplasmic side of the membrane. A disordered region spans residues 434-468 (SSSAEGKPGGSRSDLDTLPPEPAAREGPSWGSRLK).

This sequence belongs to the potassium channel family. F (TC 1.A.1.2) subfamily. Kv5.1/KCNF1 sub-subfamily. In terms of assembly, heterotetramer with KCNB1 or KCNB2.

It localises to the cell membrane. In terms of biological role, regulatory alpha-subunit of the voltage-gated potassium (Kv) channel which, when coassembled with KCNB1 or KCNB2, can modulate their expression and their gating kinetics by acting on deactivation upon repolarization and inactivation during maintained depolarization. Accelerates inactivation but has relatively little effect on deactivation. Coexpression with KCNB1 or KCNB2 markedly slows inactivation. Each modulatory subunit has its own specific properties of regulation, and can lead to extensive inhibitions, to large changes in kinetics, and/or to large shifts in the voltage dependencies of the inactivation process. The gating kinetics depends on the nature and stoichiometry of the associated regulatory sunbunit. Fails to produce a potassium current when expressed alone. The chain is Voltage-gated potassium channel regulatory subunit KCNF1 from Mus musculus (Mouse).